Consider the following 248-residue polypeptide: NAD kinase (248 aa).

The Proton acceptor role is filled by Asp-45. Residues 45–46 (DG), Arg-50, 110–111 (NE), and Asp-138 each bind NAD(+).

Belongs to the NAD kinase family. A divalent metal cation serves as cofactor.

The protein resides in the cytoplasm. It carries out the reaction NAD(+) + ATP = ADP + NADP(+) + H(+). Its function is as follows. Involved in the regulation of the intracellular balance of NAD and NADP, and is a key enzyme in the biosynthesis of NADP. Catalyzes specifically the phosphorylation on 2'-hydroxyl of the adenosine moiety of NAD to yield NADP. In Sulfurisphaera tokodaii (strain DSM 16993 / JCM 10545 / NBRC 100140 / 7) (Sulfolobus tokodaii), this protein is NAD kinase.